Reading from the N-terminus, the 575-residue chain is Isocitrate dehydrogenase kinase/phosphatase (575 aa).

ATP-binding positions include Ala315–Met321 and Lys336. Asp371 is a catalytic residue.

This sequence belongs to the AceK family.

The protein resides in the cytoplasm. The catalysed reaction is L-seryl-[isocitrate dehydrogenase] + ATP = O-phospho-L-seryl-[isocitrate dehydrogenase] + ADP + H(+). Functionally, bifunctional enzyme which can phosphorylate or dephosphorylate isocitrate dehydrogenase (IDH) on a specific serine residue. This is a regulatory mechanism which enables bacteria to bypass the Krebs cycle via the glyoxylate shunt in response to the source of carbon. When bacteria are grown on glucose, IDH is fully active and unphosphorylated, but when grown on acetate or ethanol, the activity of IDH declines drastically concomitant with its phosphorylation. The chain is Isocitrate dehydrogenase kinase/phosphatase from Citrobacter koseri (strain ATCC BAA-895 / CDC 4225-83 / SGSC4696).